An 82-amino-acid chain; its full sequence is MDKHYIYIVKCKDGSLYTGYAKDIEKRIIKHNNGQGAKYTKIRRPVQLVYQEMFDTKSEALKREYEIKTFSRQKKLKLISEG.

The GIY-YIG domain occupies 2–77; that stretch reads DKHYIYIVKC…KTFSRQKKLK (76 aa).

The protein belongs to the UPF0213 family.

The protein is UPF0213 protein SSP2268 of Staphylococcus saprophyticus subsp. saprophyticus (strain ATCC 15305 / DSM 20229 / NCIMB 8711 / NCTC 7292 / S-41).